The sequence spans 355 residues: Phosphoribosylformylglycinamidine cyclo-ligase (355 aa).

It belongs to the AIR synthase family.

Its subcellular location is the cytoplasm. It carries out the reaction 2-formamido-N(1)-(5-O-phospho-beta-D-ribosyl)acetamidine + ATP = 5-amino-1-(5-phospho-beta-D-ribosyl)imidazole + ADP + phosphate + H(+). It participates in purine metabolism; IMP biosynthesis via de novo pathway; 5-amino-1-(5-phospho-D-ribosyl)imidazole from N(2)-formyl-N(1)-(5-phospho-D-ribosyl)glycinamide: step 2/2. The chain is Phosphoribosylformylglycinamidine cyclo-ligase from Methylobacterium sp. (strain 4-46).